Reading from the N-terminus, the 461-residue chain is Squalene synthase BSS (461 aa).

Arg51 and Arg76 together coordinate NADP(+). Mg(2+) is bound by residues Asp79, Glu82, and Asp83. Residues Arg219, Lys322, and Arg324 each coordinate NADP(+). The chain crosses the membrane as a helical span at residues 430–450; sequence VTQHWWSILIFLISIAVFFIP.

The protein belongs to the phytoene/squalene synthase family. Requires Mg(2+) as cofactor.

The protein localises to the endoplasmic reticulum membrane. The enzyme catalyses 2 (2E,6E)-farnesyl diphosphate + NADPH + H(+) = squalene + 2 diphosphate + NADP(+). It carries out the reaction 2 (2E,6E)-farnesyl diphosphate + NADH + H(+) = squalene + 2 diphosphate + NAD(+). Converts farnesyl diphosphate (FPP) into squalene, a precursor for sterol biosynthesis in eukaryotes. Does not possess botryococcene synthase activity. The polypeptide is Squalene synthase BSS (Botryococcus braunii (Green alga)).